A 113-amino-acid chain; its full sequence is Mini zinc finger protein 2 (113 aa).

Residues 24 to 83 (YGECRRNHAASTGGHAVDGCREFIAAEDGGGGNSTSAVGVAAAALKCAACGCHRSFHRRV) form a ZF-HD dimerization-type; degenerate zinc finger. The segment at 93 to 113 (DCASGDTSSSSPSSSSSLSSE) is disordered. Residues 100-113 (SSSSPSSSSSLSSE) show a composition bias toward low complexity.

As to quaternary structure, homo- and heterodimers.

It is found in the cytoplasm. Its function is as follows. Inhibits zinc finger homeodomain (ZHD) transcription factors, by interacting with them to prevent both their nuclear localization and their DNA-binding properties. In Oryza sativa subsp. japonica (Rice), this protein is Mini zinc finger protein 2 (MIF3).